We begin with the raw amino-acid sequence, 463 residues long: Chromosomal replication initiator protein DnaA (463 aa).

Residues 1–90 are domain I, interacts with DnaA modulators; sequence MSLSLWQQCL…KPLSQIISQT (90 aa). The segment at 91-126 is domain II; the sequence is VTASVSAPSAPIVRVAAPSRPSWDNAAPQPELSYRS. A domain III, AAA+ region region spans residues 127–343; it reads NVNPKHTFDN…GALNRVIANA (217 aa). Residues glycine 171, glycine 173, lysine 174, and threonine 175 each contribute to the ATP site. The domain IV, binds dsDNA stretch occupies residues 344 to 463; sequence NFTGRAITID…FSNLIRTLSS (120 aa).

The protein belongs to the DnaA family. In terms of assembly, oligomerizes as a right-handed, spiral filament on DNA at oriC.

The protein resides in the cytoplasm. Functionally, plays an essential role in the initiation and regulation of chromosomal replication. ATP-DnaA binds to the origin of replication (oriC) to initiate formation of the DNA replication initiation complex once per cell cycle. Binds the DnaA box (a 9 base pair repeat at the origin) and separates the double-stranded (ds)DNA. Forms a right-handed helical filament on oriC DNA; dsDNA binds to the exterior of the filament while single-stranded (ss)DNA is stabiized in the filament's interior. The ATP-DnaA-oriC complex binds and stabilizes one strand of the AT-rich DNA unwinding element (DUE), permitting loading of DNA polymerase. After initiation quickly degrades to an ADP-DnaA complex that is not apt for DNA replication. Binds acidic phospholipids. This is Chromosomal replication initiator protein DnaA from Serratia proteamaculans (strain 568).